A 266-amino-acid polypeptide reads, in one-letter code: UPF0246 protein Pcryo_0542 (266 aa).

This sequence belongs to the UPF0246 family.

This is UPF0246 protein Pcryo_0542 from Psychrobacter cryohalolentis (strain ATCC BAA-1226 / DSM 17306 / VKM B-2378 / K5).